The chain runs to 339 residues: tRNA pseudouridine synthase B (339 aa).

Asp-40 (nucleophile) is an active-site residue. The 46-residue stretch at 262-307 folds into the RPE1 insert domain; it reads FRRLSKFAYREEFEENTERSTAAYTLVREDANTGLTYKLPLEVELS.

Belongs to the pseudouridine synthase TruB family. Type 1 subfamily.

The catalysed reaction is uridine(55) in tRNA = pseudouridine(55) in tRNA. In terms of biological role, responsible for synthesis of pseudouridine from uracil-55 in the psi GC loop of transfer RNAs. The chain is tRNA pseudouridine synthase B from Rickettsia felis (strain ATCC VR-1525 / URRWXCal2) (Rickettsia azadi).